Here is a 646-residue protein sequence, read N- to C-terminus: Lamin-1 (646 aa).

Positions Met-1–Phe-85 are head. The disordered stretch occupies residues Met-1–Leu-94. Composition is skewed to polar residues over residues Ala-48–Leu-67 and Gln-75–Arg-87. The segment at Ser-86–Gln-126 is coil 1A. The region spanning Glu-90–Leu-446 is the IF rod domain. The interval Gln-127–Ile-137 is linker 1. A coil 1B region spans residues Gly-138–Val-281. Residues Val-281–Ser-301 show a composition bias toward polar residues. Positions Val-281–Val-304 are disordered. The linker 2 stretch occupies residues Thr-282–Asp-299. The coil 2 stretch occupies residues Phe-300 to Leu-439. The tail stretch occupies residues Ser-440–Leu-646. The Nuclear localization signal signature appears at Val-457–Tyr-471. Over residues Gly-476 to Gly-487 the composition is skewed to low complexity. Positions Gly-476–Ser-513 are disordered. Residues His-488–Thr-505 show a composition bias toward polar residues. The LTD domain maps to Lys-504–Ala-618.

The protein belongs to the intermediate filament family.

The protein resides in the nucleus. Functionally, intermediate filament (IF) protein, component of the nuclear lamina, a fibrous layer on the nucleoplasmic side of the inner nuclear membrane, which is thought to provide a framework for the nuclear envelope. This Hypsibius exemplaris (Freshwater tardigrade) protein is Lamin-1.